We begin with the raw amino-acid sequence, 458 residues long: Type III intermediate filament (458 aa).

The interval 1–100 is head; it reads MEKGYKMNRS…KVNRTNEKAE (100 aa). The IF rod domain occupies 97 to 405; the sequence is EKAEMIELND…KLLEGEENRI (309 aa). Residues 406-458 form a tail region; it reads SMPLPSFGSMSLSDAMFEQQPFENRTSKKKIVIKTVETSGGDVISETTQKIED.

The protein belongs to the intermediate filament family.

The sequence is that of Type III intermediate filament from Tetronarce californica (Pacific electric ray).